Reading from the N-terminus, the 177-residue chain is Coatomer subunit zeta-1 (177 aa).

The protein belongs to the adaptor complexes small subunit family. In terms of assembly, oligomeric complex that consists of at least the alpha, beta, beta', gamma, delta, epsilon and zeta subunits.

It is found in the cytoplasm. The protein resides in the golgi apparatus membrane. It localises to the cytoplasmic vesicle. Its subcellular location is the COPI-coated vesicle membrane. Its function is as follows. The coatomer is a cytosolic protein complex that binds to dilysine motifs and reversibly associates with Golgi non-clathrin-coated vesicles, which further mediate biosynthetic protein transport from the ER, via the Golgi up to the trans Golgi network. Coatomer complex is required for budding from Golgi membranes, and is essential for the retrograde Golgi-to-ER transport of dilysine-tagged proteins. The zeta subunit may be involved in regulating the coat assembly and, hence, the rate of biosynthetic protein transport due to its association-dissociation properties with the coatomer complex. This Oryza sativa subsp. japonica (Rice) protein is Coatomer subunit zeta-1 (COPZ1).